Here is a 568-residue protein sequence, read N- to C-terminus: MRQTMTFIPTLKEVPADAEVKSHQLLLRAGFIRQTASGIYSYLPLATLMLRKIEAIIREELEAIGAAELLLPALQPAELWQESGRWNDYGPELMRLKDRASRDFALGPTHEEVITALLRDEVKSYKRLPLTLYQIQTKFRDEKRPRFGLLRGREFIMKDAYSFHATSESLDEVYKLMHQAYSNIFTRCGLEFRSVIADSGSIGGNESKEFMALSEIGEDTIAYSDASDYAANTEMAPVLYMEKKSHELEKELEKVATANQKFIADIVEFLEVPIEKTIKSMLYQVDEEVIMVLVRGDHEVNDIKIKNALDATNVELVDPAVPVEILGANFGSLGPIGVPENIRVFADNAVKDIANAVVGANEDGYHYVNVNPNRDFEVTSYFDLRMIQAGDLSPDGQGVIKFAEGIEVGHIFKLGTKYSEAMNATILDENGRAQPIIMGCYGIGVSRILSAIAEQSNDENGLVWDKQISPFDLHLIPVNMKSEEQVAFAESLYDSLQKAGFSVLIDDRAERAGVKFADADLIGLPIRITVGKKAAEGIVEVKIRKTGEMIEVRQDELLNTLPILFGDK.

It belongs to the class-II aminoacyl-tRNA synthetase family. ProS type 1 subfamily. As to quaternary structure, homodimer.

The protein localises to the cytoplasm. The catalysed reaction is tRNA(Pro) + L-proline + ATP = L-prolyl-tRNA(Pro) + AMP + diphosphate. In terms of biological role, catalyzes the attachment of proline to tRNA(Pro) in a two-step reaction: proline is first activated by ATP to form Pro-AMP and then transferred to the acceptor end of tRNA(Pro). As ProRS can inadvertently accommodate and process non-cognate amino acids such as alanine and cysteine, to avoid such errors it has two additional distinct editing activities against alanine. One activity is designated as 'pretransfer' editing and involves the tRNA(Pro)-independent hydrolysis of activated Ala-AMP. The other activity is designated 'posttransfer' editing and involves deacylation of mischarged Ala-tRNA(Pro). The misacylated Cys-tRNA(Pro) is not edited by ProRS. This Listeria welshimeri serovar 6b (strain ATCC 35897 / DSM 20650 / CCUG 15529 / CIP 8149 / NCTC 11857 / SLCC 5334 / V8) protein is Proline--tRNA ligase.